We begin with the raw amino-acid sequence, 74 residues long: Cytochrome c oxidase subunit 3 (74 aa).

2 helical membrane-spanning segments follow: residues 15–37 and 42–59; these read SPWPLTGAIGAMTTVSGMVKWFH and SLFLLGNIITILTVYQWW.

The protein belongs to the cytochrome c oxidase subunit 3 family. In terms of assembly, component of the cytochrome c oxidase (complex IV, CIV), a multisubunit enzyme composed of a catalytic core of 3 subunits and several supernumerary subunits. The complex exists as a monomer or a dimer and forms supercomplexes (SCs) in the inner mitochondrial membrane with ubiquinol-cytochrome c oxidoreductase (cytochrome b-c1 complex, complex III, CIII).

It localises to the mitochondrion inner membrane. The enzyme catalyses 4 Fe(II)-[cytochrome c] + O2 + 8 H(+)(in) = 4 Fe(III)-[cytochrome c] + 2 H2O + 4 H(+)(out). Its function is as follows. Component of the cytochrome c oxidase, the last enzyme in the mitochondrial electron transport chain which drives oxidative phosphorylation. The respiratory chain contains 3 multisubunit complexes succinate dehydrogenase (complex II, CII), ubiquinol-cytochrome c oxidoreductase (cytochrome b-c1 complex, complex III, CIII) and cytochrome c oxidase (complex IV, CIV), that cooperate to transfer electrons derived from NADH and succinate to molecular oxygen, creating an electrochemical gradient over the inner membrane that drives transmembrane transport and the ATP synthase. Cytochrome c oxidase is the component of the respiratory chain that catalyzes the reduction of oxygen to water. Electrons originating from reduced cytochrome c in the intermembrane space (IMS) are transferred via the dinuclear copper A center (CU(A)) of subunit 2 and heme A of subunit 1 to the active site in subunit 1, a binuclear center (BNC) formed by heme A3 and copper B (CU(B)). The BNC reduces molecular oxygen to 2 water molecules using 4 electrons from cytochrome c in the IMS and 4 protons from the mitochondrial matrix. The sequence is that of Cytochrome c oxidase subunit 3 (mt:CoIII) from Drosophila simulans (Fruit fly).